Here is a 558-residue protein sequence, read N- to C-terminus: MRKIRANAIAILTVAWILGTFYYLWQDNRAHAASSSGRGAQRAGGRPEQLREDRTIPLIVTGTPSKGFDEKAYLSAKQLKPGEDPYRQHAFNQLESDKLSSDRPIRDTRHYSCPSLSYSSDLPATSVIITFHNEARSTLLRTVKSVLNRTPASLIQEIILVDDFSSDPEDCLLLTRIPKVKCLRNDKREGLIRSRVRGADVAGATVLTFLDSHCEVNVEWLQPMLQRVMEDHTRVVSPIIDVISLDNFAYLAASADLRGGFDWSLHFKWEQIPLEQKMTRTDPTKPIRTPVIAGGIFVIDKSWFNHLGKYDAQMDIWGGENFELSFRVWMCGGSLEIVPCSRVGHVFRKRHPYNFPEGNALTYIRNTKRTAEVWMDEYKQYYYEARPSAIGKAFGSVATRIEQRKKMDCKSFRWYLENVYPELTVPVKEVLPGVIKQGVNCLESQGQNTAGDLLLGMGICRGSAKSPPPAQAWLFSDHLIQQQGKCLAATSTLMSSPGSPVILQTCNPKEGKQKWRRKGSFIQHSVSGLCLETKPAQLVTSKCQTDAQAQQWQLLPHT.

Over 1–6 (MRKIRA) the chain is Cytoplasmic. A helical; Signal-anchor for type II membrane protein transmembrane segment spans residues 7 to 26 (NAIAILTVAWILGTFYYLWQ). Over 27-558 (DNRAHAASSS…AQQWQLLPHT (532 aa)) the chain is Lumenal. A compositionally biased stretch (low complexity) spans 34 to 46 (SSSGRGAQRAGGR). Residues 34-53 (SSSGRGAQRAGGRPEQLRED) are disordered. 5 disulfide bridges follow: Cys113/Cys340, Cys331/Cys409, Cys441/Cys460, Cys486/Cys506, and Cys530/Cys543. Residues 122-227 (LPATSVIITF…VEWLQPMLQR (106 aa)) are catalytic subdomain A. Residues Asp163 and Arg188 each contribute to the substrate site. Residue Asp211 participates in Mn(2+) binding. Substrate is bound at residue Ser212. Mn(2+) is bound at residue His213. A catalytic subdomain B region spans residues 286-348 (PIRTPVIAGG…PCSRVGHVFR (63 aa)). Trp317 serves as a coordination point for substrate. A Mn(2+)-binding site is contributed by His345. Substrate contacts are provided by Arg348, His351, and Tyr353. Residues 428 to 555 (KEVLPGVIKQ…DAQAQQWQLL (128 aa)) form the Ricin B-type lectin domain.

Belongs to the glycosyltransferase 2 family. GalNAc-T subfamily. The cofactor is Mn(2+). As to expression, in the CNS, it is predominantly expressed in several distinct hypothalamic, thalamic and amygdaloid nuclei. The most abundant level of expression is in the paraventricular, ventromedial and arcuate nuclei of the hypothalamus, the anterodorsal and parafascicular nuclei of the thalamus and the central, basomedial and medial nuclei of the amygdala. Also expressed in cerebral cortex, lateral septum, habenula and hippocampus.

Its subcellular location is the golgi apparatus membrane. The catalysed reaction is L-seryl-[protein] + UDP-N-acetyl-alpha-D-galactosamine = a 3-O-[N-acetyl-alpha-D-galactosaminyl]-L-seryl-[protein] + UDP + H(+). It catalyses the reaction L-threonyl-[protein] + UDP-N-acetyl-alpha-D-galactosamine = a 3-O-[N-acetyl-alpha-D-galactosaminyl]-L-threonyl-[protein] + UDP + H(+). The protein operates within protein modification; protein glycosylation. In terms of biological role, catalyzes the initial reaction in O-linked oligosaccharide biosynthesis, the transfer of an N-acetyl-D-galactosamine residue to a serine or threonine residue on the protein receptor. The chain is Polypeptide N-acetylgalactosaminyltransferase 16 (Galnt16) from Mus musculus (Mouse).